The chain runs to 278 residues: Nucleotide-binding protein Tlet_0523 (278 aa).

ATP is bound at residue 9-16 (GLSGAGKS). 58 to 61 (DIRS) provides a ligand contact to GTP.

It belongs to the RapZ-like family.

Its function is as follows. Displays ATPase and GTPase activities. This chain is Nucleotide-binding protein Tlet_0523, found in Pseudothermotoga lettingae (strain ATCC BAA-301 / DSM 14385 / NBRC 107922 / TMO) (Thermotoga lettingae).